A 460-amino-acid chain; its full sequence is Argininosuccinate lyase (460 aa).

It belongs to the lyase 1 family. Argininosuccinate lyase subfamily.

It localises to the cytoplasm. The enzyme catalyses 2-(N(omega)-L-arginino)succinate = fumarate + L-arginine. It participates in amino-acid biosynthesis; L-arginine biosynthesis; L-arginine from L-ornithine and carbamoyl phosphate: step 3/3. The chain is Argininosuccinate lyase from Nitratidesulfovibrio vulgaris (strain DSM 19637 / Miyazaki F) (Desulfovibrio vulgaris).